The primary structure comprises 279 residues: BEN domain-containing protein 6 (279 aa).

The segment covering 1–15 has biased composition (polar residues); that stretch reads MQKIVQTDEITNTQA. Disordered regions lie at residues 1 to 65 and 134 to 172; these read MQKI…LAEL and RATN…TDEK. The stretch at 62 to 99 forms a coiled coil; it reads LAELSKEELCAKIKSLKEKLTNTRKENSRLRQSLVMLQ. Polar residues predominate over residues 134–148; that stretch reads RATNNSSPDSFASTC. Residues 162-172 are compositionally biased toward basic and acidic residues; it reads KPEEEHQTDEK. The 101-residue stretch at 171–271 folds into the BEN domain; sequence EKQFQIEKWQ…NCTKKPNLSK (101 aa).

Interacts (via BEN domain) with RBPJ.

Its subcellular location is the nucleus. Acts as a corepressor of recombining binding protein suppressor hairless (RBPJ) and inhibits Notch signaling in neural stem cells, thereby opposing their self-renewal and promoting neurogenesis. In Homo sapiens (Human), this protein is BEN domain-containing protein 6 (BEND6).